Consider the following 198-residue polypeptide: Mitrocomin (198 aa).

Residues 1–8 (MSMGSRYA) constitute a propeptide that is removed on maturation. EF-hand domains are found at residues 19 to 54 (KWIA…IICK), 118 to 147 (DALF…AGIQ), and 148 to 183 (QSRG…FWYS). Positions 32, 34, 36, 38, 43, 125, 127, 129, 131, 136, 161, 163, 165, 167, and 172 each coordinate Ca(2+).

The protein belongs to the aequorin family.

Ca(2+)-dependent bioluminescence photoprotein. Displays an emission peak at 470 nm (blue light). Trace amounts of calcium ion trigger the intramolecular oxidation of the chromophore, coelenterazine into coelenteramide and CO(2) with the concomitant emission of light. The protein is Mitrocomin (MI17) of Mitrocoma cellularia (Cross jellyfish).